A 1402-amino-acid chain; its full sequence is DNA-directed RNA polymerase subunit beta' (1402 aa).

Residues cysteine 71, cysteine 73, cysteine 86, and cysteine 89 each coordinate Zn(2+). The Mg(2+) site is built by aspartate 462, aspartate 464, and aspartate 466. Residues cysteine 808, cysteine 881, cysteine 888, and cysteine 891 each coordinate Zn(2+).

Belongs to the RNA polymerase beta' chain family. As to quaternary structure, the RNAP catalytic core consists of 2 alpha, 1 beta, 1 beta' and 1 omega subunit. When a sigma factor is associated with the core the holoenzyme is formed, which can initiate transcription. The cofactor is Mg(2+). Zn(2+) is required as a cofactor.

It carries out the reaction RNA(n) + a ribonucleoside 5'-triphosphate = RNA(n+1) + diphosphate. Functionally, DNA-dependent RNA polymerase catalyzes the transcription of DNA into RNA using the four ribonucleoside triphosphates as substrates. The sequence is that of DNA-directed RNA polymerase subunit beta' from Hyphomonas neptunium (strain ATCC 15444).